The following is a 165-amino-acid chain: DNA mimic protein DMP19 (165 aa).

The protein belongs to the DMP19-like protein family. In terms of assembly, monomer. Homodimer. The monomeric form of DMP19 interacts with the DNA-binding protein HU homodimer with 1:1 stoichiometry. The dimeric form of DMP19 interacts with the Neisseria hypothetical transcription factor (NHTF) dimer.

Its activity is regulated as follows. Activity can be modulated in vitro by crown ethers, which are small cyclic polyethers that can modify protein surface behavior dramatically by stabilizing either intra- or intermolecular interactions, thereby probably altering the protein's tertiary and quaternary structure. Acts as a DNA mimic. Interacts with DNA-binding proteins and prevents their binding to DNA by occupying the DNA binding sites on the proteins, acting as a competitive inhibitor. DMP19 is a bifunctional DNA mimic protein involved in controlling nucleoid formation as well as gene regulation. This bifunctionality depends on different oligomeric states. The monomeric form interacts with the DNA-binding protein HU, which prevents HU from binding to DNA and forming nucleoids. The dimeric form interacts with the Neisseria hypothetical transcription factor (NHTF) and prevents NHTF from binding to its DNA-binding sites, thereby blocking its repressor activity and influencing expression of the target genes. DMP19 might use these different oligomerizations to regulate genes in two steps: the monomeric form may first release selected gene regions in chromosomal DNA by preventing HU from binding to DNA and forming nucleoids, then the dimeric form blocks the gene repressor activity of NHTF and ensures the continued expression of NHTF-controlled genes. This Neisseria meningitidis serogroup B (strain ATCC BAA-335 / MC58) protein is DNA mimic protein DMP19.